The primary structure comprises 254 residues: MERFRWQVAAVAAVGLALALEALPSVLCWLRAGRRQQQRPPRRQVLFFPSQVTCTEALLQAPGEAPSGPPAGCRCSLPHGESSLSRLLRALLAARASLELCLFAFSSPQLGRAVQLLHQRGVRVRVITDCDYMALNGSQIGLLRKAGIQVRHDQDLGYMHHKFAIVDKKVLITGSLNWTTQAIQNNRENVLIMEDEEYVRLFLEEFERIWEEFNPTKYTFFPQKKTGTSLPPQVSCFGQLVSCHSKCSHHLSQV.

The Mitochondrial intermembrane segment spans residues 1 to 9; sequence MERFRWQVA. Positions 1 to 43 are required for mitochondrial localization; the sequence is MERFRWQVAAVAAVGLALALEALPSVLCWLRAGRRQQQRPPRR. Residues 10-32 traverse the membrane as a helical segment; it reads AVAAVGLALALEALPSVLCWLRA. Over 33-254 the chain is Cytoplasmic; that stretch reads GRRQQQRPPR…SKCSHHLSQV (222 aa). The C3H1-type; atypical zinc-finger motif lies at 49–82; it reads PSQVTCTEALLQAPGEAPSGPPAGCRCSLPHGES. In terms of domain architecture, PLD phosphodiesterase spans 155-182; it reads DLGYMHHKFAIVDKKVLITGSLNWTTQA. Catalysis depends on residues H160, K162, and D167.

The protein belongs to the phospholipase D family. MitoPLD/Zucchini subfamily. In terms of assembly, homodimer. Interacts with MOV10L1. Interacts with MIGA1 and MIGA2; possibly facilitating homodimer formation. Interacts with GK2.

It is found in the mitochondrion outer membrane. The protein localises to the nucleus membrane. It localises to the cell membrane. Its subcellular location is the golgi apparatus. It catalyses the reaction a cardiolipin + H2O = a 1,2-diacyl-sn-glycero-3-phospho-(1'-sn-glycerol) + a 1,2-diacyl-sn-glycero-3-phosphate + H(+). Single stranded DNA (ssDNA) hydrolase activity does not depend upon, but is stimulated by the presence of Ca(2+) and Mn(2+). MIGA1 and MIGA2 increase PLD6 self-association affinity and affects the homodimer conformation facilitating its phospholipase activity over the nuclease activity. MYC induces its expression and stimulates its phospholipase activity. Functionally, presents phospholipase and nuclease activities, depending on the different physiological conditions. Interaction with Mitoguardin (MIGA1 or MIGA2) affects the dimer conformation, facilitating the lipase activity over the nuclease activity. Plays a key role in mitochondrial fusion and fission via its phospholipase activity. In its phospholipase role, it uses the mitochondrial lipid cardiolipin as substrate to generate phosphatidate (PA or 1,2-diacyl-sn-glycero-3-phosphate), a second messenger signaling lipid. Production of PA facilitates Mitofusin-mediated fusion, whereas the cleavage of PA by the Lipin family of phosphatases produces diacylgycerol (DAG) which promotes mitochondrial fission. Both Lipin and DAG regulate mitochondrial dynamics and membrane fusion/fission, important processes for adapting mitochondrial metabolism to changes in cell physiology. Mitochondrial fusion enables cells to cope with the increased nucleotide demand during DNA synthesis. Mitochondrial function and dynamics are closely associated with biological processes such as cell growth, proliferation, and differentiation. Mediator of MYC activity, promotes mitochondrial fusion and activates AMPK which in turn inhibits YAP/TAZ, thereby inducing cell growth and proliferation. The endonuclease activity plays a critical role in PIWI-interacting RNA (piRNA) biogenesis during spermatogenesis. Implicated in spermatogenesis and sperm fertility in testicular germ cells, its single strand-specific nuclease activity is critical for the biogenesis/maturation of PIWI-interacting RNA (piRNA). MOV10L1 selectively binds to piRNA precursors and funnels them to the endonuclease that catalyzes the first cleavage step of piRNA processing to generate piRNA intermediate fragments that are subsequently loaded to Piwi proteins. Cleaves either DNA or RNA substrates with similar affinity, producing a 5' phosphate end, in this way it participates in the processing of primary piRNA transcripts. piRNAs provide essential protection against the activity of mobile genetic elements. piRNA-mediated transposon silencing is thus critical for maintaining genome stability, in particular in germline cells when transposons are mobilized as a consequence of wide-spread genomic demethylation. PA may act as signaling molecule in the recognition/transport of the precursor RNAs of primary piRNAs. Interacts with tesmin in testes, suggesting a role in spermatogenesis via association with its interacting partner. This chain is Mitochondrial cardiolipin hydrolase (PLD6), found in Canis lupus familiaris (Dog).